A 181-amino-acid polypeptide reads, in one-letter code: Oligoribonuclease (181 aa).

The Exonuclease domain occupies 8–171; it reads LIWIDLEMTG…DDIRESVAEL (164 aa). Tyrosine 129 is an active-site residue.

Belongs to the oligoribonuclease family.

It localises to the cytoplasm. Its function is as follows. 3'-to-5' exoribonuclease specific for small oligoribonucleotides. The sequence is that of Oligoribonuclease from Klebsiella pneumoniae subsp. pneumoniae (strain ATCC 700721 / MGH 78578).